A 445-amino-acid chain; its full sequence is Phosphoglucosamine mutase 1 (445 aa).

The Phosphoserine intermediate role is filled by Ser-102. Mg(2+) is bound by residues Ser-102, Asp-241, Asp-243, and Asp-245. Phosphoserine is present on Ser-102.

The protein belongs to the phosphohexose mutase family. The cofactor is Mg(2+). In terms of processing, activated by phosphorylation.

The enzyme catalyses alpha-D-glucosamine 1-phosphate = D-glucosamine 6-phosphate. Its function is as follows. Catalyzes the conversion of glucosamine-6-phosphate to glucosamine-1-phosphate. This Shewanella sp. (strain MR-7) protein is Phosphoglucosamine mutase 1.